Consider the following 149-residue polypeptide: Lipoprotein signal peptidase (149 aa).

2 helical membrane passes run 58–78 and 85–105; these read WFFI…LIRL and ASLA…DRAM. Residues D111 and D127 contribute to the active site. The helical transmembrane segment at 122 to 142 threads the bilayer; it reads IFNVADMAITIGVGILLLDVF.

The protein belongs to the peptidase A8 family.

The protein localises to the cell membrane. It catalyses the reaction Release of signal peptides from bacterial membrane prolipoproteins. Hydrolyzes -Xaa-Yaa-Zaa-|-(S,diacylglyceryl)Cys-, in which Xaa is hydrophobic (preferably Leu), and Yaa (Ala or Ser) and Zaa (Gly or Ala) have small, neutral side chains.. It functions in the pathway protein modification; lipoprotein biosynthesis (signal peptide cleavage). Its function is as follows. This protein specifically catalyzes the removal of signal peptides from prolipoproteins. This Brevibacillus brevis (strain 47 / JCM 6285 / NBRC 100599) protein is Lipoprotein signal peptidase.